Reading from the N-terminus, the 358-residue chain is Peptide chain release factor 1 (358 aa).

Gln-233 is modified (N5-methylglutamine).

The protein belongs to the prokaryotic/mitochondrial release factor family. Post-translationally, methylated by PrmC. Methylation increases the termination efficiency of RF1.

The protein localises to the cytoplasm. Peptide chain release factor 1 directs the termination of translation in response to the peptide chain termination codons UAG and UAA. In Staphylococcus aureus (strain MSSA476), this protein is Peptide chain release factor 1.